The sequence spans 428 residues: Ectoine/5-hydroxyectoine TRAP transporter large permease protein UehC (428 aa).

12 helical membrane passes run Met9–Ile29, Leu49–Ile69, Ala99–Ile119, Ala139–Ile159, Phe172–Ile192, Ala217–Ser237, Ala242–Leu262, Gly273–Ile293, Ile302–Ile322, Phe324–Phe344, Val366–Phe386, and Phe400–Phe420.

The protein belongs to the TRAP transporter large permease family. As to quaternary structure, the complex comprises the extracytoplasmic solute receptor protein UehA, and the two transmembrane proteins UehB and UehC.

The protein resides in the cell inner membrane. Functionally, part of the tripartite ATP-independent periplasmic (TRAP) transport system UehABC, which imports both ectoine and 5-hydroxyectoine as nutrients, and not as osmoprotectants. The protein is Ectoine/5-hydroxyectoine TRAP transporter large permease protein UehC of Ruegeria pomeroyi (strain ATCC 700808 / DSM 15171 / DSS-3) (Silicibacter pomeroyi).